Here is a 295-residue protein sequence, read N- to C-terminus: uncharacterized protein (295 aa).

This sequence belongs to the ROK (NagC/XylR) family.

This is an uncharacterized protein from Clostridium perfringens (strain 13 / Type A).